The sequence spans 159 residues: Transcription elongation factor GreA (159 aa).

Residues 44 to 75 (SENAEYDAAREQQSQTEARIADLENKLSTATI) adopt a coiled-coil conformation.

Belongs to the GreA/GreB family.

In terms of biological role, necessary for efficient RNA polymerase transcription elongation past template-encoded arresting sites. The arresting sites in DNA have the property of trapping a certain fraction of elongating RNA polymerases that pass through, resulting in locked ternary complexes. Cleavage of the nascent transcript by cleavage factors such as GreA or GreB allows the resumption of elongation from the new 3'terminus. GreA releases sequences of 2 to 3 nucleotides. The protein is Transcription elongation factor GreA of Chlorobium limicola (strain DSM 245 / NBRC 103803 / 6330).